Consider the following 187-residue polypeptide: Adenylate kinase (187 aa).

ATP is bound at residue 10–15; the sequence is GSGKGT. The segment at 30 to 59 is NMP; sequence STGDLLRAEVAAGSPLGVKAKEVMARGDLV. AMP-binding positions include threonine 31, arginine 36, 57 to 59, 85 to 88, and glutamine 92; these read DLV and GYPR. An LID region spans residues 126–136; that stretch reads GRAKAEGREDD. Residue arginine 127 coordinates ATP. The AMP site is built by arginine 133 and arginine 144. Glycine 172 lines the ATP pocket.

This sequence belongs to the adenylate kinase family. In terms of assembly, monomer.

The protein localises to the cytoplasm. It catalyses the reaction AMP + ATP = 2 ADP. It functions in the pathway purine metabolism; AMP biosynthesis via salvage pathway; AMP from ADP: step 1/1. Its function is as follows. Catalyzes the reversible transfer of the terminal phosphate group between ATP and AMP. Plays an important role in cellular energy homeostasis and in adenine nucleotide metabolism. The sequence is that of Adenylate kinase from Xanthomonas campestris pv. campestris (strain B100).